The chain runs to 191 residues: MKLKLIVGLSNPINLYYNTRHNIGSWYIKFLAKKYKKNLIKNKKYCFYYIDVKIGDYYSKLVIPDTYMNVNGTIIYNITNFYKIYSNEMLIVHDDLDLDTGIARFKFNHKNSTHNGIKSIYKSFGAKCIFNTLRIGIGRPKLNKNINSYLLNNPSPKEEILIKKTITKCIKCTDVLIKKNKDHAMNILHKK.

Tyrosine 16 contributes to the tRNA binding site. Histidine 21 serves as the catalytic Proton acceptor. Positions 67, 69, and 115 each coordinate tRNA.

The protein belongs to the PTH family. In terms of assembly, monomer.

Its subcellular location is the cytoplasm. The catalysed reaction is an N-acyl-L-alpha-aminoacyl-tRNA + H2O = an N-acyl-L-amino acid + a tRNA + H(+). Functionally, hydrolyzes ribosome-free peptidyl-tRNAs (with 1 or more amino acids incorporated), which drop off the ribosome during protein synthesis, or as a result of ribosome stalling. Catalyzes the release of premature peptidyl moieties from peptidyl-tRNA molecules trapped in stalled 50S ribosomal subunits, and thus maintains levels of free tRNAs and 50S ribosomes. The sequence is that of Peptidyl-tRNA hydrolase from Wigglesworthia glossinidia brevipalpis.